The following is a 796-amino-acid chain: Potassium transporter 10 (796 aa).

The disordered stretch occupies residues 1–30 (MAGRVESSIGGGEIDEEGDERGSMWDLDQS). Over 1-58 (MAGRVESSIGGGEIDEEGDERGSMWDLDQSLDQPMDEEAGRLRNMYREKKFSAFLLLQ) the chain is Cytoplasmic. The chain crosses the membrane as a helical span at residues 59-79 (LSFQSLGVVYGDLGTSPLYVF). Residues 80-95 (YNTFPRGIKDPEDIIG) are Extracellular-facing. The chain crosses the membrane as a helical span at residues 96–116 (ALSLIIYSLTLIPLLKYVFVV). Residues 117–184 (CKANDNGQGG…ENGTSRKNAL (68 aa)) are Cytoplasmic-facing. Residues 185–205 (LILVLVGTCMVIGDGILTPAI) traverse the membrane as a helical segment. The Extracellular segment spans residues 206-217 (SVLSAAGGLRVN). The chain crosses the membrane as a helical span at residues 218 to 238 (LPHINNGIVVVVAVVILVSLF). Residues 239–248 (SVQHYGTDRV) lie on the Cytoplasmic side of the membrane. The chain crosses the membrane as a helical span at residues 249 to 269 (GWLFAPIVFLWFLFIASIGMF). Topologically, residues 270–298 (NIWKHDPSVLKAFSPVYIFRYFKRGGQDR) are extracellular. A helical transmembrane segment spans residues 299–319 (WTSLGGIMLSITGIEALFADL). At 320–321 (SH) the chain is on the cytoplasmic side. A helical transmembrane segment spans residues 322–342 (FPVSAVQFAFTVIVFPCLLLA). At 343 to 368 (YSGQAAYLRKYPHHVEDAFYQSIPKR) the chain is on the extracellular side. Residues 369–389 (VYWPMFIIATAAAIVASQATI) traverse the membrane as a helical segment. At 390–420 (SATFSLIKQALAHGCFPRVKVVHTSRKFLGQ) the chain is on the cytoplasmic side. A helical transmembrane segment spans residues 421 to 441 (IYVPDINWILMILCIAVTAGF). The Extracellular segment spans residues 442–453 (KNQNQIGNAYGT). Residues 454–474 (AVVIVMLVTTLLMMLIMILVW) traverse the membrane as a helical segment. Topologically, residues 475–480 (RCHWVL) are cytoplasmic. The chain crosses the membrane as a helical span at residues 481–501 (VLLFTLLSLVVECTYFSAVLF). Over 502 to 505 (KVNQ) the chain is Extracellular. A helical membrane pass occupies residues 506–526 (GGWVPLVIAAAFLVIMYVWHY). Residues 527 to 796 (GTLKRYEFEM…LLNVGQIFYV (270 aa)) are Cytoplasmic-facing.

This sequence belongs to the HAK/KUP transporter (TC 2.A.72.3) family.

Its subcellular location is the cell membrane. Its function is as follows. Putative potassium transporter. The polypeptide is Potassium transporter 10 (POT10) (Arabidopsis thaliana (Mouse-ear cress)).